Here is a 215-residue protein sequence, read N- to C-terminus: C' protein (215 aa).

The segment at 12–34 is disordered; that stretch reads MPSFLKKILKLRGRRQEDESRSR. The involved in self-degradation and in host STAT1 degradation stretch occupies residues 15–22; sequence FLKKILKL.

It belongs to the respirovirus protein C family. In terms of assembly, the different isoforms interact (via C-terminus) with unphosphorylated and phosphorylated human STAT1 (via N-terminus), favoring the formation of parallel STAT1 homodimers. The different isoforms do not interact with host STAT2. C protein interacts with L protein; this interaction has an inhibitory effect on viral transcription and replication. Post-translationally, Y1 and Y2 proteins are produced not only by alternative initiation, but also by proteolytic cleavage of C'. Only alternative initiation is detected in vitro, whereas in vivo cleavage seems to be predominant.

The protein resides in the host cytoplasm. It localises to the virion. In terms of biological role, the different isoforms prevent the establishment of cellular antiviral state by blocking the interferon-alpha/beta (IFN-alpha/beta) and IFN-gamma signaling pathways. They inhibit IFN-alpha/beta induced tyrosine phosphorylation of STAT1 and STAT2. Blocking the IFN-alpha/beta pathway requires binding to STAT1 in the cytoplasm. They inhibit IFN-gamma induced serine phosphorylation of STAT1. Block the IFN-gamma pathway by binding to and stabilizing the parallel form of the STAT1 dimer, further inducing high-molecular-weight complex (HMWC) formation and inhibition of transcription by IFN-gamma. May also have a role in preventing the cell to enter apoptosis. Modulate regulation of viral transcription and replication. Overexpression inhibits the viral RNA polymerase. The absence of all C', C, Y1 and Y2 proteins leads to viral delayed growth. Plays an important role in virion particles release. Modulates virion shape. This Sendai virus (strain Z) (SeV) protein is C' protein (P/V/C).